Reading from the N-terminus, the 613-residue chain is Penicillin-binding protein activator LpoA (613 aa).

Positions 1–29 (MNSMLNFTHKRKSVSRLLAPVALAVILAG) are cleaved as a signal peptide. Cys-30 is lipidated: N-palmitoyl cysteine. Residue Cys-30 is the site of S-diacylglycerol cysteine attachment.

It belongs to the LpoA family. In terms of assembly, interacts with PBP1a.

It is found in the cell outer membrane. Functionally, regulator of peptidoglycan synthesis that is essential for the function of penicillin-binding protein 1A (PBP1a). This Photobacterium profundum (strain SS9) protein is Penicillin-binding protein activator LpoA.